The sequence spans 299 residues: Urease accessory protein UreD (299 aa).

The protein belongs to the UreD family. UreD, UreF and UreG form a complex that acts as a GTP-hydrolysis-dependent molecular chaperone, activating the urease apoprotein by helping to assemble the nickel containing metallocenter of UreC. The UreE protein probably delivers the nickel.

The protein resides in the cytoplasm. Functionally, required for maturation of urease via the functional incorporation of the urease nickel metallocenter. The sequence is that of Urease accessory protein UreD from Haloarcula marismortui (strain ATCC 43049 / DSM 3752 / JCM 8966 / VKM B-1809) (Halobacterium marismortui).